The chain runs to 279 residues: Phosphonates import ATP-binding protein PhnC (279 aa).

Residues 2 to 245 (FQLKNVTRQF…AVAAIYGAET (244 aa)) form the ABC transporter domain. 34-41 (GRSGAGKS) provides a ligand contact to ATP.

It belongs to the ABC transporter superfamily. Phosphonates importer (TC 3.A.1.9.1) family. In terms of assembly, the complex is composed of two ATP-binding proteins (PhnC), two transmembrane proteins (PhnE) and a solute-binding protein (PhnD).

The protein localises to the cell inner membrane. The catalysed reaction is phosphonate(out) + ATP + H2O = phosphonate(in) + ADP + phosphate + H(+). Part of the ABC transporter complex PhnCDE involved in phosphonates import. Responsible for energy coupling to the transport system. This chain is Phosphonates import ATP-binding protein PhnC, found in Rhizobium meliloti (strain 1021) (Ensifer meliloti).